A 155-amino-acid polypeptide reads, in one-letter code: Ribosome maturation factor RimP (155 aa).

The protein belongs to the RimP family.

Its subcellular location is the cytoplasm. Required for maturation of 30S ribosomal subunits. This Bacteroides thetaiotaomicron (strain ATCC 29148 / DSM 2079 / JCM 5827 / CCUG 10774 / NCTC 10582 / VPI-5482 / E50) protein is Ribosome maturation factor RimP.